A 123-amino-acid chain; its full sequence is Protein Wnt-7b (123 aa).

Residue Ser1 is the site of O-palmitoleoyl serine; by PORCN attachment. The segment at 33 to 61 (VEVVRASRLRQPTFLKIKQIKSYQKPMET) is disordered linker. A disulfide bridge connects residues Cys89 and Cys104. Residue Asn90 is glycosylated (N-linked (GlcNAc...) asparagine).

The protein belongs to the Wnt family. Post-translationally, palmitoleoylation is required for efficient binding to frizzled receptors. Depalmitoleoylation leads to Wnt signaling pathway inhibition.

The protein resides in the secreted. The protein localises to the extracellular space. Its subcellular location is the extracellular matrix. Its function is as follows. Ligand for members of the frizzled family of seven transmembrane receptors that functions in the canonical Wnt/beta-catenin signaling pathway. Required for normal fusion of the chorion and the allantois during placenta development. Required for central nervous system (CNS) angiogenesis and blood-brain barrier regulation. The polypeptide is Protein Wnt-7b (WNT7B) (Anser caerulescens (Snow goose)).